We begin with the raw amino-acid sequence, 666 residues long: MSREVTSGLPQDKPTGSAPPPPPPWRRWLLPIGLLVSLVLLFTFPMRPSSGKTLTYSEFLTALHHHDIKTITIHSDGEASGQFADGRPYSTTIPIGLAGSQLLNELENNGVQISARPPGPSLASQVLAGVLSFLPFLLLLGLFAYSGRRAGAGFLAGLPGIGRARAKIFTTERPQTRFSDVAGYDGVKAEIAEVVDFLRSPERYRRAGAAIPRGVLMVGPPGTGKTLMARAVAGEAGVPFLSVTGSSFVEMFVGVGASRVRDLFEEARKHAPCIVFVDEIDAIGQRRAGAGTIVANDEREQTLNQLLAEMDGFEPAQGVVVLAATNRPEVLDPALLRPGRFDRQVTVPLPSQADRAAILRVHCRNKRLAPDVDLDAVARATPGFSGAELANLVNEAAIAAARAGRRDLTAEDFRYARDRIILGRREDSNVLLPSERHAVAVHEAGHAVVAACSENADPVERVTILPAGRALGVTFQLPLAERHLYSESYLRDSLAVRLGGRAAELEILGEASTGAVNDLSSATELALRMVREYGLSPRLGPVSYPVGGSMYLPGGQELTPRPYAEATQQRIDQEVADLLRDAEERARDIIRRNRQAVDELASLLLEQESVDGAVVYQLVGRPVPTPEEHREAAARHVRRPGIAAATGASMAGGSEPRTAASSDDLL.

Residues 1–23 (MSREVTSGLPQDKPTGSAPPPPP) form a disordered region. At 1-27 (MSREVTSGLPQDKPTGSAPPPPPPWRR) the chain is on the cytoplasmic side. A helical transmembrane segment spans residues 28-48 (WLLPIGLLVSLVLLFTFPMRP). Topologically, residues 49–125 (SSGKTLTYSE…RPPGPSLASQ (77 aa)) are extracellular. Residues 126–146 (VLAGVLSFLPFLLLLGLFAYS) traverse the membrane as a helical segment. The Cytoplasmic segment spans residues 147–666 (GRRAGAGFLA…RTAASSDDLL (520 aa)). Residue 219–226 (GPPGTGKT) coordinates ATP. Residue H442 coordinates Zn(2+). Residue E443 is part of the active site. Zn(2+) contacts are provided by H446 and D518. Positions 626 to 666 (PEEHREAAARHVRRPGIAAATGASMAGGSEPRTAASSDDLL) are disordered. Positions 641 to 653 (GIAAATGASMAGG) are enriched in low complexity.

It in the central section; belongs to the AAA ATPase family. In the C-terminal section; belongs to the peptidase M41 family. Homohexamer. The cofactor is Zn(2+).

It localises to the cell membrane. Its function is as follows. Acts as a processive, ATP-dependent zinc metallopeptidase for both cytoplasmic and membrane proteins. Plays a role in the quality control of integral membrane proteins. This is ATP-dependent zinc metalloprotease FtsH from Acidothermus cellulolyticus (strain ATCC 43068 / DSM 8971 / 11B).